The primary structure comprises 330 residues: MTNNRVRVAVTGAAGQIGYALVFRIASGQMFGPNTEVELNLLELEPALPSLEGVAMELDDCAFPLLKRIVCTADLNKAMDGVNWALLVGSVPRKQGMERSDLLQINGGIFTKQGQAINDYASDDVRVFVVGNPCNTNCLIAMNHAKDVPSDRFYAMTTLDELRARTQLAKKAGVDITAVTQMTIWGNHSATQYPDFYNAKINGTSAARVINDQTWLKETFVSTVQQRGAAVIKARGSSSAASAANAIITGVNHLVTDTPAGESFSMCRRSKGEYGVDEGLIFSFPCRREHGELKVVENMEFNDFGRERFNITLNELRSERDTVKSLGLLD.

12–18 (GAAGQIG) serves as a coordination point for NAD(+). 2 residues coordinate substrate: Arg93 and Arg99. NAD(+)-binding positions include Asn106, Gln113, and 130–132 (VGN). Positions 132 and 163 each coordinate substrate. His188 acts as the Proton acceptor in catalysis.

Belongs to the LDH/MDH superfamily. MDH type 2 family.

The catalysed reaction is (S)-malate + NAD(+) = oxaloacetate + NADH + H(+). Functionally, catalyzes the reversible oxidation of malate to oxaloacetate. The chain is Malate dehydrogenase from Legionella pneumophila (strain Lens).